Reading from the N-terminus, the 1810-residue chain is Trinucleotide repeat-containing gene 6B protein (1810 aa).

Positions 1 to 22 are enriched in acidic residues; sequence MQTNEGEVEEESSSQVEQEDFV. Disordered stretches follow at residues 1–221, 235–1080, 1141–1196, and 1293–1329; these read MQTN…PNPI, EEWP…KKQM, MRKD…SSPG, and ALQQ…NMVP. Positions 33–75 form a coiled coil; it reads GEESKQEKEQEREEQLMEDKKRKKEDKKKKEATQKVTEQKTKV. Composition is skewed to basic and acidic residues over residues 34–52 and 60–77; these read EESK…MEDK and KKKE…KVPE. Residues 37–1028 are interaction with argonaute proteins; sequence KQEKEQEREE…AMKPNSKSMQ (992 aa). Positions 88–106 are enriched in low complexity; it reads AASPIGSSPSPPVNGGNNA. Over residues 123-139 the composition is skewed to basic and acidic residues; that stretch reads MPREVPPRFRCQQDHKV. A compositionally biased stretch (low complexity) spans 165–174; it reads APGANPNNNA. Residues 180–190 are compositionally biased toward polar residues; that stretch reads LLQSESGTAPE. Low complexity-rich tracts occupy residues 207 to 220 and 248 to 260; these read GPGA…SPNP and SSEN…SASN. Polar residues-rich tracts occupy residues 261–290 and 306–327; these read PGSE…SGNE and QPPN…TSGQ. Low complexity-rich tracts occupy residues 335 to 346, 363 to 380, and 416 to 425; these read GFSNFNPNSNPS, ETES…GQAS, and NSLNLSSPNP. Over residues 438–451 the composition is skewed to polar residues; it reads GNTSRSTDAPSQST. Positions 475-486 are enriched in low complexity; that stretch reads SGQSNSGNNGNN. 4 stretches are compositionally biased toward polar residues: residues 504-528, 564-575, 611-623, and 655-667; these read GSKS…PQDN, GPNQPNSSTGAW, TGSN…SDSH, and LSNT…QIKQ. Residues 675–688 are compositionally biased toward basic and acidic residues; it reads EVPRPEGKSDKGTE. Polar residues-rich tracts occupy residues 774–783 and 793–804; these read QPNQGWTSGK and VKNNNWESSANK. Gly residues predominate over residues 809–824; the sequence is WGEGGQNEIGTWGNGG. The span at 846–857 shows a compositional bias: polar residues; the sequence is TGRQPNSWNKQH. A Phosphoserine modification is found at Ser-913. Polar residues-rich tracts occupy residues 934 to 950, 964 to 975, 1004 to 1027, 1057 to 1072, and 1175 to 1195; these read NSYN…NSQG, TGKSASVWSKST, ASTT…SKSM, TAGS…SASW, and GNST…SSSP. The tract at residues 1191–1700 is silencing domain; interaction with CNOT1 and PAN3; the sequence is LSSSPGLRAQ…LAEFATEDEV (510 aa). Residues 1295–1307 are compositionally biased toward low complexity; it reads QQQQQQQQQQQRQ. The residue at position 1409 (Ser-1409) is a Phosphoserine. Thr-1426 bears the Phosphothreonine mark. Phosphoserine is present on Ser-1438. A Phosphothreonine modification is found at Thr-1441. The segment at 1449 to 1467 is PABPC1-interacting motif-2 (PAM2); the sequence is SNASWPPEFQPGVPWKGIQ. The tract at residues 1568 to 1619 is disordered; that stretch reads SSRNTTPLTRPPPGLTNPKPASPWSSTAPRSVRGWGTQDSRIASASTWSDGG. Positions 1604–1617 are enriched in polar residues; that stretch reads TQDSRIASASTWSD. The RRM domain maps to 1625–1697; the sequence is YWLVLHNLTP…TTILAEFATE (73 aa). Disordered regions lie at residues 1706 to 1740 and 1786 to 1810; these read QAQP…GPAL and EDPH…SDSI. Over residues 1722-1733 the composition is skewed to polar residues; the sequence is GWQSLETSQNQA. The span at 1792–1801 shows a compositional bias: low complexity; that stretch reads GSPAPLLPGD. 2 positions are modified to phosphoserine: Ser-1793 and Ser-1809.

Belongs to the GW182 family. In terms of assembly, interacts with AGO1, AGO2, AGO3 and AGO4. Interacts with CNOT1; the interaction mediates the association with the CCR4-NOT complex. Interacts with PAN3; the interaction mediates the association with the PAN complex. Interacts with MOV10; the interaction is direct and RNA-dependent.

It localises to the cytoplasm. The protein resides in the P-body. Its function is as follows. Plays a role in RNA-mediated gene silencing by both micro-RNAs (miRNAs) and short interfering RNAs (siRNAs). Required for miRNA-dependent translational repression and siRNA-dependent endonucleolytic cleavage of complementary mRNAs by argonaute family proteins. As scaffolding protein associates with argonaute proteins bound to partially complementary mRNAs and simultaneously can recruit CCR4-NOT and PAN deadenylase complexes. This Mus musculus (Mouse) protein is Trinucleotide repeat-containing gene 6B protein (Tnrc6b).